An 800-amino-acid polypeptide reads, in one-letter code: Ion-translocating oxidoreductase complex subunit C (800 aa).

4Fe-4S ferredoxin-type domains follow at residues 367–398 and 408–437; these read DEFS…QQLY and KARG…VQYY. Residues C378, C381, C384, C388, C417, C420, C423, and C427 each contribute to the [4Fe-4S] cluster site. Low complexity-rich tracts occupy residues 536 to 553, 571 to 583, 599 to 617, 647 to 667, and 675 to 690; these read GATP…APAP, AKQA…PAAT, AAIA…APAA, AKQA…ADPA, and AAIA…KQAA. Disordered stretches follow at residues 536 to 558, 571 to 631, and 647 to 706; these read GATP…DDPR, AKQA…QDDP, and AKQA…ENTD. A compositionally biased stretch (polar residues) spans 693-705; the sequence is HATTEPVTVQENT.

This sequence belongs to the 4Fe4S bacterial-type ferredoxin family. RnfC subfamily. As to quaternary structure, the complex is composed of six subunits: RnfA, RnfB, RnfC, RnfD, RnfE and RnfG. [4Fe-4S] cluster serves as cofactor.

The protein resides in the cell inner membrane. Functionally, part of a membrane-bound complex that couples electron transfer with translocation of ions across the membrane. This chain is Ion-translocating oxidoreductase complex subunit C, found in Edwardsiella ictaluri (strain 93-146).